We begin with the raw amino-acid sequence, 340 residues long: Phosphoribosylformylglycinamidine cyclo-ligase (340 aa).

This sequence belongs to the AIR synthase family.

It localises to the cytoplasm. The catalysed reaction is 2-formamido-N(1)-(5-O-phospho-beta-D-ribosyl)acetamidine + ATP = 5-amino-1-(5-phospho-beta-D-ribosyl)imidazole + ADP + phosphate + H(+). Its pathway is purine metabolism; IMP biosynthesis via de novo pathway; 5-amino-1-(5-phospho-D-ribosyl)imidazole from N(2)-formyl-N(1)-(5-phospho-D-ribosyl)glycinamide: step 2/2. The sequence is that of Phosphoribosylformylglycinamidine cyclo-ligase from Streptococcus pyogenes serotype M1.